Here is a 65-residue protein sequence, read N- to C-terminus: U2-theraphotoxin-Pc1a (65 aa).

An N-terminal signal peptide occupies residues methionine 1–alanine 20. A propeptide spanning residues glutamate 21–glutamate 36 is cleaved from the precursor. Cystine bridges form between cysteine 39/cysteine 56, cysteine 46/cysteine 59, and cysteine 55/cysteine 64.

This sequence belongs to the neurotoxin 36 family. 02 subfamily. Expressed by the venom gland.

The protein localises to the secreted. Its function is as follows. Possesses strong antiplasmodial activity against the intra-erythrocyte stage of P.falciparum in vitro. IC(50) for inhibiting P.falciparum growth is 1.15 uM. Specifically interacts with infected erythrocytes. Does not lyse erythrocytes, is not cytotoxic to nucleated mammalian cells, and does not inhibit neuromuscular function. Has neither antibacterial nor antifungal activity. The chain is U2-theraphotoxin-Pc1a from Psalmopoeus cambridgei (Trinidad chevron tarantula).